The primary structure comprises 244 residues: uncharacterized protein (244 aa).

A disordered region spans residues 30 to 49 (RETNESPKSQNPSEEATTVN). The span at 35 to 49 (SPKSQNPSEEATTVN) shows a compositional bias: polar residues. Transmembrane regions (helical) follow at residues 96–116 (LWGT…LSNS), 128–148 (LLFI…FGLF), 171–191 (GFFI…TIAF), and 194–214 (FVTI…HPLS). The interval 224–244 (QLDGSGERKTDSSLVHQNPPN) is disordered. Over residues 235–244 (SSLVHQNPPN) the composition is skewed to polar residues.

Its subcellular location is the nucleus membrane. This is an uncharacterized protein from Schizosaccharomyces pombe (strain 972 / ATCC 24843) (Fission yeast).